A 205-amino-acid polypeptide reads, in one-letter code: Guanylate kinase (205 aa).

Positions 17-195 (SRLLVLSGPS…AVEAVERLLF (179 aa)) constitute a Guanylate kinase-like domain. 24 to 31 (GPSGVGKD) is an ATP binding site.

It belongs to the guanylate kinase family.

Its subcellular location is the cytoplasm. It carries out the reaction GMP + ATP = GDP + ADP. Functionally, essential for recycling GMP and indirectly, cGMP. The sequence is that of Guanylate kinase from Gloeobacter violaceus (strain ATCC 29082 / PCC 7421).